We begin with the raw amino-acid sequence, 588 residues long: WD repeat-containing protein DDB_G0349043 (588 aa).

A disordered region spans residues 1–32; sequence MPLDNKVQLNENGKEVNNNNNNDEDLKIQDNH. The region spanning 40–72 is the LisH domain; the sequence is NRSELVRLLIQSLNSLGYDKSAEFLEKDSGISL. Positions 73 to 129 constitute a CTLH domain; the sequence is QSKEINQFSECVVSGDWNKVEELLPFLKLNEFDTNNVKFLVYSQKFLEYLENHKIKE. WD repeat units follow at residues 244 to 283, 294 to 333, and 336 to 375; these read KHRD…LDQP, GHTK…LLKT, and KHSD…LTNS. Residues 376–403 form a disordered region; it reads NNNNNNHNNNNSNINGNSINGSNNNGNN. WD repeat units follow at residues 413 to 452, 455 to 494, 499 to 539, and 542 to 582; these read WACA…TPEV, METD…IVQK, KQGR…LLET, and RHSG…NSFI.

The polypeptide is WD repeat-containing protein DDB_G0349043 (Dictyostelium discoideum (Social amoeba)).